The chain runs to 603 residues: F-box only protein 46 (603 aa).

The segment at 18 to 54 is disordered; that stretch reads SKYSQNQPRPPSTALKPPVCPDTSSGTEPDHRPAHLE. A phosphoserine mark is found at Ser-21 and Ser-67. Disordered stretches follow at residues 113 to 165, 235 to 301, 332 to 359, and 412 to 442; these read SRAS…SSGD, EAQR…TRAK, EASEGETPAPTRPEDTPPAPPPPPARDC, and QSRGPEGPPEPPPADIPSTVPGPDDSEGTTD. The residue at position 347 (Thr-347) is a Phosphothreonine. Composition is skewed to pro residues over residues 347 to 356 and 417 to 426; these read TPPAPPPPPA and EGPPEPPPAD. The F-box domain occupies 470-522; it reads RQYMLLLPEHVLVKIFSFLPTRALAALKCTCHHFKGIIEAFGVRATDSRWSRD.

Part of a SCF (SKP1-cullin-F-box) protein ligase complex SCF(FBXO46) composed of CUL1, SKP1, RBX1 and FBXO46. In terms of processing, phosphorylated by ATM in response to DNA damage, promoting ubiquitination and degradation by the SCF(FBXO31) complex. ATM-phosphorylated FBXO46 is ubiquitinated and degradaded by the SCF(FBXO31) complex in response to DNA damage.

It participates in protein modification; protein ubiquitination. Substrate-recognition component of the SCF(FBXO46) protein ligase complex, which mediates the ubiquitination and degradation of target proteins. In absence of stress, the SCF(FBXO46) complex catalyzes ubiquitination and degradation of MTOR-phosphorylated FBXO31. The protein is F-box only protein 46 (Fbxo46) of Mus musculus (Mouse).